The chain runs to 244 residues: ATP synthase subunit a, chloroplastic (244 aa).

5 helical membrane passes run 35–55, 92–112, 131–151, 196–216, and 217–237; these read QVLI…AIAV, VPFI…GALL, INTT…AGIT, LVVV…VMFL, and GLFT…AYIG.

This sequence belongs to the ATPase A chain family. As to quaternary structure, F-type ATPases have 2 components, CF(1) - the catalytic core - and CF(0) - the membrane proton channel. CF(1) has five subunits: alpha(3), beta(3), gamma(1), delta(1), epsilon(1). CF(0) has four main subunits: a, b, b' and c.

Its subcellular location is the plastid. It is found in the chloroplast thylakoid membrane. Key component of the proton channel; it plays a direct role in the translocation of protons across the membrane. The protein is ATP synthase subunit a, chloroplastic of Coffea arabica (Arabian coffee).